The primary structure comprises 395 residues: Dual specificity mitogen-activated protein kinase kinase 1 (395 aa).

Residues 1–24 (MPKKKPTPIQLNPNPEGTAVNGTP) form a disordered region. Polar residues predominate over residues 9 to 24 (IQLNPNPEGTAVNGTP). Positions 68-363 (FEKVSELGAG…LKQLMVHSFI (296 aa)) constitute a Protein kinase domain. ATP contacts are provided by residues 74-82 (LGAGNGGVV) and Lys-97. Asp-190 acts as the Proton acceptor in catalysis. Ser-218 and Ser-222 each carry phosphoserine; by RAF. The disordered stretch occupies residues 284–305 (ASSELAPRPRPPGRPISSYGPD).

It belongs to the protein kinase superfamily. STE Ser/Thr protein kinase family. MAP kinase kinase subfamily. In terms of processing, activated by phosphorylation on Ser/Thr catalyzed by MAP kinase kinase kinases (RAF or MOS). Expressed in the central nervous system, kidney, liver, intestine and the hematopoietic system.

It is found in the cytoplasm. The protein localises to the cytoskeleton. Its subcellular location is the microtubule organizing center. The protein resides in the centrosome. It localises to the spindle pole body. It is found in the nucleus. The enzyme catalyses L-seryl-[protein] + ATP = O-phospho-L-seryl-[protein] + ADP + H(+). It catalyses the reaction L-threonyl-[protein] + ATP = O-phospho-L-threonyl-[protein] + ADP + H(+). It carries out the reaction L-tyrosyl-[protein] + ATP = O-phospho-L-tyrosyl-[protein] + ADP + H(+). Dual specificity protein kinase which acts as an essential component of the MAP kinase signal transduction pathway. Binding of extracellular ligands such as growth factors, cytokines and hormones to their cell-surface receptors activates the MAPK/ERK cascade, ultimately leading to phosphorylation of a threonine and a tyrosine residue in a Thr-Glu-Tyr sequence located in MAP kinases. Depending on the cellular context, this pathway mediates diverse biological functions such as cell growth, adhesion, survival and differentiation predominantly through the regulation of transcription, metabolism and cytoskeletal rearrangements. The protein is Dual specificity mitogen-activated protein kinase kinase 1 (map2k1) of Xenopus laevis (African clawed frog).